A 769-amino-acid chain; its full sequence is Probable beta-glucosidase M (769 aa).

The N-terminal stretch at Met1–Ser22 is a signal peptide. N-linked (GlcNAc...) asparagine glycans are attached at residues Asn28, Asn75, and Asn262. The active site involves Asp290. Asn318, Asn325, Asn396, Asn437, Asn510, Asn546, and Asn625 each carry an N-linked (GlcNAc...) asparagine glycan.

The protein belongs to the glycosyl hydrolase 3 family.

It localises to the secreted. It catalyses the reaction Hydrolysis of terminal, non-reducing beta-D-glucosyl residues with release of beta-D-glucose.. The protein operates within glycan metabolism; cellulose degradation. Beta-glucosidases are one of a number of cellulolytic enzymes involved in the degradation of cellulosic biomass. Catalyzes the last step releasing glucose from the inhibitory cellobiose. The sequence is that of Probable beta-glucosidase M (bglM) from Aspergillus fumigatus (strain CBS 144.89 / FGSC A1163 / CEA10) (Neosartorya fumigata).